Reading from the N-terminus, the 658-residue chain is Endoplasmic reticulum chaperone BiP (658 aa).

Residues 1–19 (MVTMKLFALVLLVSASVFA) form the signal peptide. ATP-binding positions include 38-41 (GTTY), K98, 228-230 (GGT), 294-301 (EKAKRALS), and 365-368 (GSTR). The segment at 127 to 281 (KPYIEVDIGD…KKKTGKDVRA (155 aa)) is nucleotide-binding (NBD). The tract at residues 410 to 420 (QDTGDLVLLDV) is interdomain linker. Positions 421 to 501 (CPLTLGIETV…PRGVPQIEVT (81 aa)) are substrate-binding (SBD). Residues 634 to 658 (KLYGGAGAPPPEGAEGAEETEKDEL) are disordered. Acidic residues predominate over residues 648–658 (EGAEETEKDEL). Positions 655–658 (KDEL) match the Prevents secretion from ER motif.

The protein belongs to the heat shock protein 70 family. In terms of assembly, monomer and homooligomer; homooligomerization via the interdomain linker inactivates the chaperone activity and acts as a storage of hspa5/BiP molecules. Interacts with DNAJC10. Interacts with dnajb9/ERdj4; leading to recruit hspa5/BiP to ern1/ire1. Interacts with ern1/ire1; interaction takes place following interaction with dnajb9/ERdj4 and leads to inactivate ern1/IRE1.

The protein localises to the endoplasmic reticulum lumen. The enzyme catalyses ATP + H2O = ADP + phosphate + H(+). The chaperone activity is regulated by ATP-induced allosteric coupling of the nucleotide-binding (NBD) and substrate-binding (SBD) domains. In the ADP-bound and nucleotide-free (apo) states, the two domains have little interaction. In contrast, in the ATP-bound state the two domains are tightly coupled, which results in drastically accelerated kinetics in both binding and release of polypeptide substrates. J domain-containing co-chaperones (dnajb9/ERdj4 or dnajc10/ERdj5) stimulate the ATPase activity and are required for efficient substrate recognition by hspa5/BiP. Homooligomerization inactivates participating hspa5/BiP protomers and probably act as reservoirs to store hspa5/BiP molecules when they are not needed by the cell. Endoplasmic reticulum chaperone that plays a key role in protein folding and quality control in the endoplasmic reticulum lumen. Involved in the correct folding of proteins and degradation of misfolded proteins via its interaction with dnajc10/ERdj5, probably to facilitate the release of dnajc10/ERdj5 from its substrate. Acts as a key repressor of the EIF2AK3/PERK and ERN1/IRE1-mediated unfolded protein response (UPR). In the unstressed endoplasmic reticulum, recruited by DNAJB9/ERdj4 to the luminal region of ERN1/IRE1, leading to disrupt the dimerization of ERN1/IRE1, thereby inactivating ERN1/IRE1. Also binds and inactivates EIF2AK3/PERK in unstressed cells. Accumulation of misfolded protein in the endoplasmic reticulum causes release of HSPA5/BiP from ERN1/IRE1 and EIF2AK3/PERK, allowing their homodimerization and subsequent activation. The sequence is that of Endoplasmic reticulum chaperone BiP from Xenopus laevis (African clawed frog).